The following is a 382-amino-acid chain: Putative NADPH dehydrogenase C5H10.04 (382 aa).

Thr-28 and His-189 together coordinate FMN. His-189 and Asn-192 together coordinate substrate. Residues Arg-242 and Arg-334 each coordinate FMN. Residue Tyr-361 coordinates substrate.

Belongs to the NADH:flavin oxidoreductase/NADH oxidase family. Homodimer or heterodimer. FMN is required as a cofactor.

The enzyme catalyses A + NADPH + H(+) = AH2 + NADP(+). This is Putative NADPH dehydrogenase C5H10.04 from Schizosaccharomyces pombe (strain 972 / ATCC 24843) (Fission yeast).